A 142-amino-acid chain; its full sequence is Hemoglobin subunit alpha-3 (142 aa).

The Globin domain maps to 2–142 (TLTDSDKAAV…VATVLTSKYR (141 aa)). Histidine 59 contacts O2. Histidine 88 is a heme b binding site.

It belongs to the globin family. In terms of assembly, heterotetramer of two alpha chains and two beta chains. Red blood cells.

Its function is as follows. This is a larval (tadpole) alpha-globin. This Xenopus laevis (African clawed frog) protein is Hemoglobin subunit alpha-3 (hba3).